Here is a 431-residue protein sequence, read N- to C-terminus: UDP-N-acetylglucosamine 1-carboxyvinyltransferase (431 aa).

Residue 22 to 23 (KN) coordinates phosphoenolpyruvate. A UDP-N-acetyl-alpha-D-glucosamine-binding site is contributed by arginine 102. Residue cysteine 126 is the Proton donor of the active site. The residue at position 126 (cysteine 126) is a 2-(S-cysteinyl)pyruvic acid O-phosphothioketal. Residues 131 to 135 (RPVDL), aspartate 316, and isoleucine 338 each bind UDP-N-acetyl-alpha-D-glucosamine.

It belongs to the EPSP synthase family. MurA subfamily.

The protein resides in the cytoplasm. The enzyme catalyses phosphoenolpyruvate + UDP-N-acetyl-alpha-D-glucosamine = UDP-N-acetyl-3-O-(1-carboxyvinyl)-alpha-D-glucosamine + phosphate. Its pathway is cell wall biogenesis; peptidoglycan biosynthesis. Functionally, cell wall formation. Adds enolpyruvyl to UDP-N-acetylglucosamine. This Beijerinckia indica subsp. indica (strain ATCC 9039 / DSM 1715 / NCIMB 8712) protein is UDP-N-acetylglucosamine 1-carboxyvinyltransferase.